The following is a 508-amino-acid chain: Zinc finger CCCH-type with G patch domain-containing protein (508 aa).

The disordered stretch occupies residues 67–86 (QQESSHHDSGTPETDTKTSV). The segment covering 69-86 (ESSHHDSGTPETDTKTSV) has biased composition (basic and acidic residues). Residues 161 to 188 (RSMVPCPYFLEGKCKFAGAECRFSHGYL) form a C3H1-type zinc finger. The segment at 253–282 (IYPLGPEEVESDSESDSQSDTGDSSSSKAA) is disordered. Positions 259–269 (EEVESDSESDS) are enriched in acidic residues. A compositionally biased stretch (low complexity) spans 270-279 (QSDTGDSSSS). In terms of domain architecture, G-patch spans 310 to 356 (TKGIGSKLMAKMGYIFGKGLGKDGEGRVEPIEVVVLPQGKSLDKCAE). The disordered stretch occupies residues 404 to 426 (SLHDLRVSHPGAKPDIRKTRKSA).

The protein resides in the nucleus. Functionally, transcription repressor. In Nematostella vectensis (Starlet sea anemone), this protein is Zinc finger CCCH-type with G patch domain-containing protein.